A 40-amino-acid polypeptide reads, in one-letter code: Putative NAD(P)-dependent glyceraldehyde-3-phosphate dehydrogenase PS5 (40 aa).

This chain is Putative NAD(P)-dependent glyceraldehyde-3-phosphate dehydrogenase PS5, found in Pinus strobus (Eastern white pine).